Reading from the N-terminus, the 251-residue chain is Triosephosphate isomerase (251 aa).

9–11 is a substrate binding site; sequence NWK. The Electrophile role is filled by H96. E168 serves as the catalytic Proton acceptor. Substrate-binding positions include G174, S214, and 235 to 236; that span reads GG.

It belongs to the triosephosphate isomerase family. In terms of assembly, homodimer.

The protein resides in the cytoplasm. It catalyses the reaction D-glyceraldehyde 3-phosphate = dihydroxyacetone phosphate. The protein operates within carbohydrate biosynthesis; gluconeogenesis. It functions in the pathway carbohydrate degradation; glycolysis; D-glyceraldehyde 3-phosphate from glycerone phosphate: step 1/1. Functionally, involved in the gluconeogenesis. Catalyzes stereospecifically the conversion of dihydroxyacetone phosphate (DHAP) to D-glyceraldehyde-3-phosphate (G3P). The sequence is that of Triosephosphate isomerase from Cytophaga hutchinsonii (strain ATCC 33406 / DSM 1761 / CIP 103989 / NBRC 15051 / NCIMB 9469 / D465).